The sequence spans 539 residues: Probable protein kinase UbiB (539 aa).

A helical transmembrane segment spans residues Asp-23–Trp-43. Positions Arg-125–Leu-492 constitute a Protein kinase domain. ATP-binding positions include Leu-131 to Val-139 and Lys-153. Asp-288 (proton acceptor) is an active-site residue. 2 helical membrane passes run Leu-494–Ala-514 and Leu-517–Val-537.

The protein belongs to the ABC1 family. UbiB subfamily.

It is found in the cell inner membrane. It functions in the pathway cofactor biosynthesis; ubiquinone biosynthesis [regulation]. Is probably a protein kinase regulator of UbiI activity which is involved in aerobic coenzyme Q (ubiquinone) biosynthesis. The sequence is that of Probable protein kinase UbiB from Pseudomonas syringae pv. syringae (strain B728a).